The chain runs to 84 residues: uncharacterized protein (84 aa).

This is an uncharacterized protein from Lepidoptera (butterflies and moths).